Here is a 127-residue protein sequence, read N- to C-terminus: MAYRKLGRDSAHRKAMLREMTTQLIMNERIVTTETRAKEIRKTTEKMITLGKRGDLSARRKAAAFVRNEIADIHEEKDAVVVKSALQKLFSDIAPRYKDRNGGYTRMYKLATPRKGDAAPMVIIELV.

The protein belongs to the bacterial ribosomal protein bL17 family. As to quaternary structure, part of the 50S ribosomal subunit. Contacts protein L32.

The protein is Large ribosomal subunit protein bL17 of Lactobacillus gasseri (strain ATCC 33323 / DSM 20243 / BCRC 14619 / CIP 102991 / JCM 1131 / KCTC 3163 / NCIMB 11718 / NCTC 13722 / AM63).